The sequence spans 476 residues: MKIMFVAAEGAPFAKTGGLGDVIGALPKSLSKKGHDVAVVMPYYDMVDQKFGDQIENLMYFYTDVGWRHQYVGVKRLSQDNVTFYFIDNQYYFYRGHVYGDWDDGERFAYFQLAALELMEKIDFIPDVLHVHDYHTAMIPFLLKEKYHWIQAYNNIRAVFTIHNIEFQGQFGPEMLGDLFGVGAERYEDGTLRWNNCLNWMKAAILYSDRVTTVSPSYANEIKTPEFGKGLDQIMRMEAGKLSGIVNGIDSDLLNPETDAFLPYHFSKSNLEGKIKNKLALQENLGLPQDKNVPLIGIVSRLTDQKGFDIIASELDNMLQQDIQMVILGTGYHHFEETFSYFASRYPEKLSANITFDLRLAQQIYAASDIFMMPSAFEPCGLSQMMAMRYGSLPLVHEVGGLKDTVVAFNQFDGSGTGFSFNHFSGYWLMQTLKLALEVYNDYPEAWKKLQWQAMSKDFSWDTACVAYEQLYQQLQ.

Position 15 (lysine 15) interacts with ADP-alpha-D-glucose.

This sequence belongs to the glycosyltransferase 1 family. Bacterial/plant glycogen synthase subfamily.

It catalyses the reaction [(1-&gt;4)-alpha-D-glucosyl](n) + ADP-alpha-D-glucose = [(1-&gt;4)-alpha-D-glucosyl](n+1) + ADP + H(+). It participates in glycan biosynthesis; glycogen biosynthesis. In terms of biological role, synthesizes alpha-1,4-glucan chains using ADP-glucose. This is Glycogen synthase from Streptococcus agalactiae serotype Ia (strain ATCC 27591 / A909 / CDC SS700).